The chain runs to 192 residues: tRNA (cytidine(56)-2'-O)-methyltransferase (192 aa).

S-adenosyl-L-methionine is bound by residues Leu-84 and 112 to 116 (GGEKV).

Belongs to the aTrm56 family. Homodimer.

Its subcellular location is the cytoplasm. It catalyses the reaction cytidine(56) in tRNA + S-adenosyl-L-methionine = 2'-O-methylcytidine(56) in tRNA + S-adenosyl-L-homocysteine + H(+). Functionally, specifically catalyzes the AdoMet-dependent 2'-O-ribose methylation of cytidine at position 56 in tRNAs. This Halobacterium salinarum (strain ATCC 700922 / JCM 11081 / NRC-1) (Halobacterium halobium) protein is tRNA (cytidine(56)-2'-O)-methyltransferase.